We begin with the raw amino-acid sequence, 247 residues long: Probable cyclic nucleotide phosphodiesterase XBJ1_0953 (247 aa).

Fe cation-binding residues include Asp-8, His-10, Asp-52, Asn-82, His-154, His-192, and His-194. AMP is bound by residues His-10, Asp-52, and 82–83 (NH). His-194 is a binding site for AMP.

This sequence belongs to the cyclic nucleotide phosphodiesterase class-III family. It depends on Fe(2+) as a cofactor.

The polypeptide is Probable cyclic nucleotide phosphodiesterase XBJ1_0953 (Xenorhabdus bovienii (strain SS-2004) (Xenorhabdus nematophila subsp. bovienii)).